Reading from the N-terminus, the 131-residue chain is Small ribosomal subunit protein uS8 (131 aa).

This sequence belongs to the universal ribosomal protein uS8 family. As to quaternary structure, part of the 30S ribosomal subunit. Contacts proteins S5 and S12.

Functionally, one of the primary rRNA binding proteins, it binds directly to 16S rRNA central domain where it helps coordinate assembly of the platform of the 30S subunit. This chain is Small ribosomal subunit protein uS8, found in Azoarcus sp. (strain BH72).